We begin with the raw amino-acid sequence, 441 residues long: Methylenetetrahydrofolate--tRNA-(uracil-5-)-methyltransferase TrmFO (441 aa).

11–16 (GGGLAG) lines the FAD pocket.

This sequence belongs to the MnmG family. TrmFO subfamily. FAD serves as cofactor.

The protein resides in the cytoplasm. The catalysed reaction is uridine(54) in tRNA + (6R)-5,10-methylene-5,6,7,8-tetrahydrofolate + NADH + H(+) = 5-methyluridine(54) in tRNA + (6S)-5,6,7,8-tetrahydrofolate + NAD(+). It catalyses the reaction uridine(54) in tRNA + (6R)-5,10-methylene-5,6,7,8-tetrahydrofolate + NADPH + H(+) = 5-methyluridine(54) in tRNA + (6S)-5,6,7,8-tetrahydrofolate + NADP(+). Its function is as follows. Catalyzes the folate-dependent formation of 5-methyl-uridine at position 54 (M-5-U54) in all tRNAs. The sequence is that of Methylenetetrahydrofolate--tRNA-(uracil-5-)-methyltransferase TrmFO from Syntrophus aciditrophicus (strain SB).